The primary structure comprises 396 residues: Methionine import ATP-binding protein MetN 2 (396 aa).

Residues 41–280 form the ABC transporter domain; sequence VSFELVGKVF…PRHGATRALL (240 aa). 77 to 84 contributes to the ATP binding site; the sequence is GRSGAGKS.

This sequence belongs to the ABC transporter superfamily. Methionine importer (TC 3.A.1.24) family. In terms of assembly, the complex is composed of two ATP-binding proteins (MetN), two transmembrane proteins (MetI) and a solute-binding protein (MetQ).

Its subcellular location is the cell inner membrane. The catalysed reaction is L-methionine(out) + ATP + H2O = L-methionine(in) + ADP + phosphate + H(+). The enzyme catalyses D-methionine(out) + ATP + H2O = D-methionine(in) + ADP + phosphate + H(+). Its function is as follows. Part of the ABC transporter complex MetNIQ involved in methionine import. Responsible for energy coupling to the transport system. The polypeptide is Methionine import ATP-binding protein MetN 2 (Burkholderia pseudomallei (strain K96243)).